Here is a 199-residue protein sequence, read N- to C-terminus: dITP/XTP pyrophosphatase (199 aa).

Ser8–Lys13 provides a ligand contact to substrate. Asp69 functions as the Proton acceptor in the catalytic mechanism. Residue Asp69 participates in Mg(2+) binding. Residues Ser70, Phe154 to Asn157, Lys177, and His182 to Arg183 each bind substrate.

Belongs to the HAM1 NTPase family. As to quaternary structure, homodimer. The cofactor is Mg(2+).

The enzyme catalyses XTP + H2O = XMP + diphosphate + H(+). The catalysed reaction is dITP + H2O = dIMP + diphosphate + H(+). It catalyses the reaction ITP + H2O = IMP + diphosphate + H(+). In terms of biological role, pyrophosphatase that catalyzes the hydrolysis of nucleoside triphosphates to their monophosphate derivatives, with a high preference for the non-canonical purine nucleotides XTP (xanthosine triphosphate), dITP (deoxyinosine triphosphate) and ITP. Seems to function as a house-cleaning enzyme that removes non-canonical purine nucleotides from the nucleotide pool, thus preventing their incorporation into DNA/RNA and avoiding chromosomal lesions. The protein is dITP/XTP pyrophosphatase of Xanthomonas oryzae pv. oryzae (strain KACC10331 / KXO85).